A 219-amino-acid chain; its full sequence is Interleukin-12 subunit alpha (219 aa).

The signal sequence occupies residues 1-22 (MCPARSLLLVATLVLLDYLSLA). Asn24, Asn93, and Asn107 each carry an N-linked (GlcNAc...) asparagine glycan. 3 disulfides stabilise this stretch: Cys37-Cys110, Cys64-Cys196, and Cys85-Cys123.

Belongs to the IL-6 superfamily. Heterodimer with IL12B; disulfide-linked. This heterodimer is known as interleukin IL-12. Heterodimer with EBI3/IL27B; not disulfide-linked. This heterodimer is known as interleukin IL-35. Interacts with NBR1; this interaction promotes IL-12 secretion.

It localises to the secreted. Heterodimerizes with IL12B to form the IL-12 cytokine or with EBI3/IL27B to form the IL-35 cytokine. IL-12 is primarily produced by professional antigen-presenting cells (APCs) such as B-cells and dendritic cells (DCs) as well as macrophages and granulocytes and regulates T-cell and natural killer-cell responses, induces the production of interferon-gamma (IFN-gamma), favors the differentiation of T-helper 1 (Th1) cells and is an important link between innate resistance and adaptive immunity. Mechanistically, exerts its biological effects through a receptor composed of IL12R1 and IL12R2 subunits. Binding to the receptor results in the rapid tyrosine phosphorylation of a number of cellular substrates including the JAK family kinases TYK2 and JAK2. In turn, recruited STAT4 gets phosphorylated and translocates to the nucleus where it regulates cytokine/growth factor responsive genes. As part of IL-35, plays essential roles in maintaining the immune homeostasis of the liver microenvironment and also functions as an immune-suppressive cytokine. Mediates biological events through unconventional receptors composed of IL12RB2 and gp130/IL6ST heterodimers or homodimers. Signaling requires the transcription factors STAT1 and STAT4, which form a unique heterodimer that binds to distinct DNA sites. In Cercocebus atys (Sooty mangabey), this protein is Interleukin-12 subunit alpha (IL12A).